Consider the following 439-residue polypeptide: Arginine biosynthesis bifunctional protein ArgJ, mitochondrial (439 aa).

Positions 175, 201, 212, 301, 434, and 439 each coordinate substrate. The active-site Nucleophile is the T212.

Belongs to the ArgJ family. Heterodimer of an alpha and a beta chain. Post-translationally, the alpha and beta chains are autoproteolytically processed from a single precursor protein within the mitochondrion.

It localises to the mitochondrion matrix. It catalyses the reaction N(2)-acetyl-L-ornithine + L-glutamate = N-acetyl-L-glutamate + L-ornithine. It carries out the reaction L-glutamate + acetyl-CoA = N-acetyl-L-glutamate + CoA + H(+). It participates in amino-acid biosynthesis; L-arginine biosynthesis; L-ornithine and N-acetyl-L-glutamate from L-glutamate and N(2)-acetyl-L-ornithine (cyclic): step 1/1. It functions in the pathway amino-acid biosynthesis; L-arginine biosynthesis; N(2)-acetyl-L-ornithine from L-glutamate: step 1/4. Functionally, catalyzes two activities which are involved in the cyclic version of arginine biosynthesis: the synthesis of acetylglutamate from glutamate and acetyl-CoA, and of ornithine by transacetylation between acetylornithine and glutamate. The sequence is that of Arginine biosynthesis bifunctional protein ArgJ, mitochondrial (ECM42) from Candida albicans (strain SC5314 / ATCC MYA-2876) (Yeast).